Consider the following 630-residue polypeptide: Elongation factor 4 (630 aa).

The segment at Met-1–Ala-22 is disordered. The 182-residue stretch at Ala-30–Val-211 folds into the tr-type G domain. GTP contacts are provided by residues Asp-42 to Thr-47 and Asn-158 to Asp-161.

Belongs to the TRAFAC class translation factor GTPase superfamily. Classic translation factor GTPase family. LepA subfamily.

The protein resides in the cell membrane. It catalyses the reaction GTP + H2O = GDP + phosphate + H(+). Its function is as follows. Required for accurate and efficient protein synthesis under certain stress conditions. May act as a fidelity factor of the translation reaction, by catalyzing a one-codon backward translocation of tRNAs on improperly translocated ribosomes. Back-translocation proceeds from a post-translocation (POST) complex to a pre-translocation (PRE) complex, thus giving elongation factor G a second chance to translocate the tRNAs correctly. Binds to ribosomes in a GTP-dependent manner. This is Elongation factor 4 from Rhodococcus jostii (strain RHA1).